Consider the following 689-residue polypeptide: Transcription factor BHLH42 (689 aa).

2 disordered regions span residues 192-287 (IDHH…NPRV) and 458-489 (DDNNSPKSATAADSASRFRKPTPQDELSANHV). Residues 206–217 (EHSTSNLATSSV) show a composition bias toward polar residues. Residues 246–271 (EEQEQEQEEDEDDDDDDDDEEEAESD) are compositionally biased toward acidic residues. The tract at residues 483-496 (ELSANHVLAERRRR) is basic motif. Residues 483 to 532 (ELSANHVLAERRRREKLNERFIILRSLVPFVTKMDKASILGDTIEYVKQL) enclose the bHLH domain. The helix-loop-helix motif stretch occupies residues 497-532 (EKLNERFIILRSLVPFVTKMDKASILGDTIEYVKQL). The interval 547 to 570 (EIDQRSRSSGDPQRSGAKAATDKR) is disordered.

It belongs to the bHLH protein family. In terms of assembly, interacts with MYB123. Expressed in the inner pericarp of maturing fruits.

Its subcellular location is the nucleus. In terms of biological role, transcription activator involved in the spatiotemporal regulation of anthocyanin biosynthesis specifically in the inner pericarp of red-fleshed kiwifruits. Functions in association with MYB123 to activate the promoters of LDOX (ANS) and F3GT1 that encode the dedicated enzymes for anthocyanin biosynthesis. The sequence is that of Transcription factor BHLH42 from Actinidia chinensis var. chinensis (Chinese soft-hair kiwi).